A 175-amino-acid chain; its full sequence is Major pollen allergen Pha a 5.4 (175 aa).

The protein belongs to the Poa p IX/Phl p VI allergen family.

The protein is Major pollen allergen Pha a 5.4 of Phalaris aquatica (Canary grass).